Consider the following 148-residue polypeptide: Glutamyl-tRNA(Gln) amidotransferase subunit C, mitochondrial (148 aa).

Belongs to the GatC family. As to quaternary structure, subunit of the heterotrimeric GatCAB amidotransferase (AdT) complex, composed of A, B and C subunits.

It localises to the mitochondrion. The enzyme catalyses L-glutamyl-tRNA(Gln) + L-glutamine + ATP + H2O = L-glutaminyl-tRNA(Gln) + L-glutamate + ADP + phosphate + H(+). Allows the formation of correctly charged Gln-tRNA(Gln) through the transamidation of misacylated Glu-tRNA(Gln) in the mitochondria. The reaction takes place in the presence of glutamine and ATP through an activated gamma-phospho-Glu-tRNA(Gln). This Drosophila simulans (Fruit fly) protein is Glutamyl-tRNA(Gln) amidotransferase subunit C, mitochondrial.